Reading from the N-terminus, the 333-residue chain is MKKSTKLLAGIVTLASAMTLAACQSTNDNTSVITMKGDTISVSDFYNETKNTEVSQRAMLNLVVSRVFEDQYGKKVSKKKTEEAYNKSAEQYGASFSAALAQSGLTTDTYKRQIRSAMLVEYAVKEAAKKELTDADYKKAYESYTPEMTTQVITLDNEETAKAILGEVKAEGADFAAIAKEKTTAADKKVDYKFDSGDTKLPADVIKAASGLKEGDISEVVSVLDPATYQNKFYIVKVTKKAEKASDWKKYKKRLKEIVLAEKTQNIDFQNKVIAKALDKANVKIKDQAFANILAQYANTDKKASKANTSKSDQKTSSDSSKDSQSSKSKSEK.

Residues 1–22 form the signal peptide; sequence MKKSTKLLAGIVTLASAMTLAA. The N-palmitoyl cysteine moiety is linked to residue C23. The S-diacylglycerol cysteine moiety is linked to residue C23. The PpiC domain maps to 145 to 240; it reads TPEMTTQVIT…NKFYIVKVTK (96 aa). The interval 301-333 is disordered; it reads DKKASKANTSKSDQKTSSDSSKDSQSSKSKSEK. Over residues 312–322 the composition is skewed to basic and acidic residues; it reads SDQKTSSDSSK. A compositionally biased stretch (low complexity) spans 323–333; the sequence is DSQSSKSKSEK.

Belongs to the PrsA family.

It localises to the cell membrane. It carries out the reaction [protein]-peptidylproline (omega=180) = [protein]-peptidylproline (omega=0). Its function is as follows. Plays a major role in protein secretion by helping the post-translocational extracellular folding of several secreted proteins. This is Foldase protein PrsA from Streptococcus equi subsp. zooepidemicus (strain H70).